The primary structure comprises 364 residues: MKLIKLKLASFRNLQNIELAPGKKFNVFYGNNGQGKTNLLESIYLLATMKSFKQARNAELIAFGGEFALVKGTVERDQVRREIAVLIEKQGKKAKVDAKLMTRLDDFFGNLNVVLFTPEEISMVRGGPDLRRRYLDRAVFTCDLGYLTAYHDYAKILKNRNALLKVNETAGIEVWTEQLVQAALLVIERRKAYLDRIGRLLQGFYSEISGNDETVQIEYRLHGVDARLFAEDPAEALNQALRAHAAEERRRGSTAIGPHRDDLYFGLNGRGARQFASQGQQRSFVLALKMAEIEHITRCFEAPPVLLLDDMTSELDRERNRNLMEFLKKREMQVFITTTSLHNVDVDELQDNRTFRIKEGKILD.

30–37 (GNNGQGKT) contacts ATP.

The protein belongs to the RecF family.

The protein localises to the cytoplasm. In terms of biological role, the RecF protein is involved in DNA metabolism; it is required for DNA replication and normal SOS inducibility. RecF binds preferentially to single-stranded, linear DNA. It also seems to bind ATP. This Geobacter sp. (strain M21) protein is DNA replication and repair protein RecF.